The primary structure comprises 367 residues: Isoflavone 4'-O-methyltransferase (367 aa).

Residues 209-212 (VGGG), Asp-233, 233-234 (DQ), 253-254 (DM), and Lys-267 each bind S-adenosyl-L-methionine. His-271 acts as the Proton acceptor in catalysis.

The protein belongs to the class I-like SAM-binding methyltransferase superfamily. Cation-independent O-methyltransferase family. COMT subfamily.

The catalysed reaction is a 4'-hydroxyisoflavone + S-adenosyl-L-methionine = a 4'-methoxyisoflavone + S-adenosyl-L-homocysteine + H(+). It carries out the reaction (2R,3S)-2,4',7-trihydroxyisoflavanone + S-adenosyl-L-methionine = (2R,3S)-2,7-dihydroxy-4'-methoxyisoflavanone + S-adenosyl-L-homocysteine + H(+). 2-hydroxyisoflavanone 4'-O-methyltransferase involved in the biosynthesis of formononetin. Can use 2,7,4'-trihydroxyisoflavanone, (+)-6a-hydroxymaackiain or medicarpin as substrate, but not daidzein or (-)-6a-hydroxymaackiain. This chain is Isoflavone 4'-O-methyltransferase (HI4'OMT), found in Glycyrrhiza echinata (Licorice).